The chain runs to 691 residues: Guanylate cyclase soluble subunit alpha-1 (691 aa).

Phosphoserine is present on Ser-267. The Guanylate cyclase domain occupies 480–607 (VTMLFSDIVG…GNNVTLANKF (128 aa)).

It belongs to the adenylyl cyclase class-4/guanylyl cyclase family. The active enzyme is formed by a heterodimer of an alpha and a beta subunit. Heterodimer with GUCY1B1. The cofactor is Mg(2+). It depends on Mn(2+) as a cofactor.

Its subcellular location is the cytoplasm. The catalysed reaction is GTP = 3',5'-cyclic GMP + diphosphate. Activated by nitric oxide in the presence of magnesium or manganese ions. This chain is Guanylate cyclase soluble subunit alpha-1 (Gucy1a1), found in Mus musculus (Mouse).